A 640-amino-acid polypeptide reads, in one-letter code: Rab proteins geranylgeranyltransferase component A (640 aa).

Disordered regions lie at residues 414–439 (DILG…NNNN) and 594–640 (HNEN…EMEL). The segment covering 419 to 439 (NNNNNNNNNNNNNNNNNNNNN) has biased composition (low complexity). Residues 604-624 (IDSDEDEDEDINDMNDNEEED) show a composition bias toward acidic residues.

Belongs to the Rab GDI family.

Its function is as follows. Substrate-binding subunit (component A) of the Rab geranylgeranyltransferase (GGTase) complex. Binds unprenylated Rab proteins and presents the substrate peptide to the catalytic component B. The component A is thought to be regenerated by transferring its prenylated Rab back to the donor membrane. The protein is Rab proteins geranylgeranyltransferase component A (MRS6) of Candida albicans (Yeast).